An 81-amino-acid chain; its full sequence is uncharacterized protein (81 aa).

Helical transmembrane passes span 10-30 (FFVL…FLLL) and 56-76 (VLYL…AFAI).

The protein localises to the host membrane. This is an uncharacterized protein from Acidianus two-tailed virus (ATV).